A 207-amino-acid chain; its full sequence is Proteasome subunit beta 1 (207 aa).

Residues Met1 to Gly9 constitute a propeptide, removed in mature form; by autocatalysis. Thr10 acts as the Nucleophile in catalysis.

This sequence belongs to the peptidase T1B family. The 20S proteasome core is composed of 14 alpha and 14 beta subunits that assemble into four stacked heptameric rings, resulting in a barrel-shaped structure. The two inner rings, each composed of seven catalytic beta subunits, are sandwiched by two outer rings, each composed of seven alpha subunits. The catalytic chamber with the active sites is on the inside of the barrel. Has a gated structure, the ends of the cylinder being occluded by the N-termini of the alpha-subunits. Is capped at one or both ends by the proteasome regulatory ATPase, PAN.

The protein localises to the cytoplasm. The enzyme catalyses Cleavage of peptide bonds with very broad specificity.. Its activity is regulated as follows. The formation of the proteasomal ATPase PAN-20S proteasome complex, via the docking of the C-termini of PAN into the intersubunit pockets in the alpha-rings, triggers opening of the gate for substrate entry. Interconversion between the open-gate and close-gate conformations leads to a dynamic regulation of the 20S proteasome proteolysis activity. Functionally, component of the proteasome core, a large protease complex with broad specificity involved in protein degradation. The polypeptide is Proteasome subunit beta 1 (Thermococcus sibiricus (strain DSM 12597 / MM 739)).